Consider the following 237-residue polypeptide: Class B acid phosphatase (237 aa).

The N-terminal stretch at 1–23 (MKKITLALSAVCLLFTLNHSANA) is a signal peptide. The active-site Nucleophile is the aspartate 69. Residues aspartate 69 and aspartate 71 each coordinate Mg(2+). Aspartate 71 serves as the catalytic Proton donor. Substrate is bound by residues 137-138 (TG) and lysine 177. Mg(2+) is bound at residue aspartate 192.

This sequence belongs to the class B bacterial acid phosphatase family. As to quaternary structure, homotetramer. Requires Mg(2+) as cofactor.

It localises to the periplasm. It carries out the reaction a phosphate monoester + H2O = an alcohol + phosphate. With respect to regulation, nucleosides, and particularly 2'-deoxyribonucleosides, are potent inhibitors of the phosphatase activity. The phosphatase activity is also inhibited by inorganic phosphate and EDTA in vitro. Dephosphorylates several organic phosphate monoesters such as 3'-UMP, 5'-UMP and pNPP. Also has a phosphotransferase activity catalyzing the transfer of low-energy phosphate groups from organic phosphate monoesters to free hydroxyl groups of various organic compounds such as the 2'-, 3-, or 5'-hydroxyls of nucleosides and nucleotides. Also displays significant phosphomutase activity since it is able to catalyze the transfer of the phosphate group of 3'-AMP from the 3'-position both to the 2'- and 5'-positions. One of the physiological functions of the phosphohydrolytic activity of the enzyme is believed to be the scavenging of organic phosphate esters that otherwise cannot pass the cytoplasmic membrane. This Salmonella typhimurium (strain LT2 / SGSC1412 / ATCC 700720) protein is Class B acid phosphatase (aphA).